A 362-amino-acid polypeptide reads, in one-letter code: Notoamide biosynthesis cluster protein J' (362 aa).

The signal sequence occupies residues Met-1–Thr-22. 4 N-linked (GlcNAc...) asparagine glycosylation sites follow: Asn-157, Asn-190, Asn-280, and Asn-338.

Part of the gene cluster that mediates the biosynthesis of notoamide, a fungal indole alkaloid that belongs to a family of natural products containing a characteristic bicyclo[2.2.2]diazaoctane core. The first step of notoamide biosynthesis involves coupling of L-proline and L-tryptophan by the bimodular NRPS notE', to produce cyclo-L-tryptophan-L-proline called brevianamide F. The reverse prenyltransferase notF' then acts as a deoxybrevianamide E synthase and converts brevianamide F to deoxybrevianamide E via reverse prenylation at C-2 of the indole ring leading to the bicyclo[2.2.2]diazaoctane core. Deoxybrevianamide E is further hydroxylated at C-6 of the indole ring, likely catalyzed by the cytochrome P450 monooxygenase notG', to yield 6-hydroxy-deoxybrevianamide E. 6-hydroxy-deoxybrevianamide E is a specific substrate of the prenyltransferase notC' for normal prenylation at C-7 to produce 6-hydroxy-7-prenyl-deoxybrevianamide, also called notoamide S. As the proposed pivotal branching point in notoamide biosynthesis, notoamide S can be diverted to notoamide E through an oxidative pyran ring closure putatively catalyzed by either notH' cytochrome P450 monooxygenase or the notD' FAD-linked oxidoreductase. This step would be followed by an indole 2,3-epoxidation-initiated pinacol-like rearrangement catalyzed by the notB' FAD-dependent monooxygenase leading to the formation of notoamide C and notoamide D. On the other hand notoamide S is converted to notoamide T by notH' (or notD'), a bifunctional oxidase that also functions as the intramolecular Diels-Alderase responsible for generation of (-)-notoamide T. To generate antipodal (+)-notoaminide T, notH (or notD) in Aspergillus strain MF297-2 is expected to catalyze a Diels-Alder reaction leading to the opposite stereochemistry. The remaining oxidoreductase notD' (or notH') likely catalyzes the oxidative pyran ring formation to yield (-)-stephacidin A. The FAD-dependent monooxygenase notI' is highly similar to notB' and is predicted to catalyze a similar conversion from (-)-stephacidin A to (+)-notoamide B via the 2,3-epoxidation of (-)-stephacidin A followed by a pinacol-type rearrangement. Finally, it remains unclear which enzyme could be responsible for the final hydroxylation steps leading to notoamide A and sclerotiamide. The function of notJ' in the notoamide biosynthesis has not been determined yet. The protein is Notoamide biosynthesis cluster protein J' of Aspergillus versicolor.